A 687-amino-acid polypeptide reads, in one-letter code: Geranylgeranyl transferase type-2 subunit alpha 2 (687 aa).

PFTA repeat units lie at residues 38–72, 83–117, 132–167, 168–203, and 214–248; these read YTKE…SRLD, IIDE…KKGH, YQKQ…LTKT, SEED…SLVA, and TIRR…QTVK. LRR repeat units lie at residues 523 to 545, 546 to 567, 568 to 591, 592 to 616, and 646 to 668; these read MNNI…VEKL, LFVQ…LEAM, QLLC…SLRH, LKQL…TTRY, and LMKL…EFSS.

This sequence belongs to the protein prenyltransferase subunit alpha family. Heterotrimer composed of the alpha subunit RGTA, the beta subunit RGTB and REP; within this trimer, RGTA and RGTB form the catalytic component, while REP mediates peptide substrate binding.

The enzyme catalyses geranylgeranyl diphosphate + L-cysteinyl-[protein] = S-geranylgeranyl-L-cysteinyl-[protein] + diphosphate. The enzymatic reaction requires the aid of the Rab escort protein REP. In terms of biological role, catalyzes the transfer of a geranylgeranyl moiety from geranylgeranyl diphosphate to both cysteines of Rab proteins with the C-terminal sequence -CCXX, CXXX, -XCCX and -XCXC, such as RABA1A, RABA2A, RABF2A and RABG2. Does not seem to be a functional Rab-GGT alpha subunit in vitro. This is Geranylgeranyl transferase type-2 subunit alpha 2 from Arabidopsis thaliana (Mouse-ear cress).